Here is a 22-residue protein sequence, read N- to C-terminus: Thylakoid lumenal 11 kDa protein (22 aa).

Residues 1–22 (FKGGGPYGQGVTRGQDLSGKDF) are disordered.

It to A.thaliana At2g44920.

The protein localises to the plastid. It localises to the chloroplast thylakoid lumen. The sequence is that of Thylakoid lumenal 11 kDa protein from Spinacia oleracea (Spinach).